A 116-amino-acid chain; its full sequence is Nitrogenase-stabilizing/protective protein NifW (116 aa).

Belongs to the NifW family. As to quaternary structure, homotrimer; associates with NifD.

May protect the nitrogenase Fe-Mo protein from oxidative damage. In Rhodopseudomonas palustris (strain TIE-1), this protein is Nitrogenase-stabilizing/protective protein NifW.